A 100-amino-acid polypeptide reads, in one-letter code: Small ribosomal subunit protein uS14c (100 aa).

It belongs to the universal ribosomal protein uS14 family. Part of the 30S ribosomal subunit.

It localises to the plastid. Its subcellular location is the chloroplast. Binds 16S rRNA, required for the assembly of 30S particles. The protein is Small ribosomal subunit protein uS14c of Psilotum nudum (Whisk fern).